The primary structure comprises 329 residues: Ribosomal protein L11 methyltransferase (329 aa).

S-adenosyl-L-methionine-binding residues include threonine 177, glycine 198, aspartate 220, and asparagine 264.

It belongs to the methyltransferase superfamily. PrmA family.

The protein localises to the cytoplasm. The enzyme catalyses L-lysyl-[protein] + 3 S-adenosyl-L-methionine = N(6),N(6),N(6)-trimethyl-L-lysyl-[protein] + 3 S-adenosyl-L-homocysteine + 3 H(+). In terms of biological role, methylates ribosomal protein L11. The polypeptide is Ribosomal protein L11 methyltransferase (Helicobacter acinonychis (strain Sheeba)).